Reading from the N-terminus, the 216-residue chain is Octanoyltransferase (216 aa).

Positions 30-204 (KNNINEIWLL…NCKKFLMMNN (175 aa)) constitute a BPL/LPL catalytic domain. Substrate contacts are provided by residues 68–75 (RGGHMTFH), 135–137 (SIG), and 148–150 (GLA). Residue C166 is the Acyl-thioester intermediate of the active site.

Belongs to the LipB family.

Its subcellular location is the cytoplasm. The catalysed reaction is octanoyl-[ACP] + L-lysyl-[protein] = N(6)-octanoyl-L-lysyl-[protein] + holo-[ACP] + H(+). It participates in protein modification; protein lipoylation via endogenous pathway; protein N(6)-(lipoyl)lysine from octanoyl-[acyl-carrier-protein]: step 1/2. Functionally, catalyzes the transfer of endogenously produced octanoic acid from octanoyl-acyl-carrier-protein onto the lipoyl domains of lipoate-dependent enzymes. Lipoyl-ACP can also act as a substrate although octanoyl-ACP is likely to be the physiological substrate. The protein is Octanoyltransferase of Wigglesworthia glossinidia brevipalpis.